Consider the following 381-residue polypeptide: Phthiodiolone/phenolphthiodiolone dimycocerosates ketoreductase (381 aa).

It belongs to the mer family. Phthiodiolone/phenolphthiodiolone dimycocerosates ketoreductase subfamily.

In terms of biological role, catalyzes the reduction of the keto moiety of phthiodiolone dimycocerosates (DIM B) and glycosylated phenolphthiodiolone dimycocerosates to form the intermediate compounds phthiotriol and glycosylated phenolphthiotriol dimycocerosates during phthiocerol dimycocerosates (DIM A) and glycosylated phenolphthiocerol dimycocerosates (PGL) biosynthesis. This is Phthiodiolone/phenolphthiodiolone dimycocerosates ketoreductase from Mycobacterium tuberculosis (strain CDC 1551 / Oshkosh).